Here is a 215-residue protein sequence, read N- to C-terminus: Thiamine-phosphate synthase (215 aa).

4-amino-2-methyl-5-(diphosphooxymethyl)pyrimidine-binding positions include 43-47 (QLRDK) and asparagine 75. Mg(2+)-binding residues include aspartate 76 and aspartate 95. Serine 114 provides a ligand contact to 4-amino-2-methyl-5-(diphosphooxymethyl)pyrimidine. A 2-[(2R,5Z)-2-carboxy-4-methylthiazol-5(2H)-ylidene]ethyl phosphate-binding site is contributed by 141-143 (TPT). Lysine 144 lines the 4-amino-2-methyl-5-(diphosphooxymethyl)pyrimidine pocket. Glycine 172 is a 2-[(2R,5Z)-2-carboxy-4-methylthiazol-5(2H)-ylidene]ethyl phosphate binding site.

The protein belongs to the thiamine-phosphate synthase family. It depends on Mg(2+) as a cofactor.

The enzyme catalyses 2-[(2R,5Z)-2-carboxy-4-methylthiazol-5(2H)-ylidene]ethyl phosphate + 4-amino-2-methyl-5-(diphosphooxymethyl)pyrimidine + 2 H(+) = thiamine phosphate + CO2 + diphosphate. The catalysed reaction is 2-(2-carboxy-4-methylthiazol-5-yl)ethyl phosphate + 4-amino-2-methyl-5-(diphosphooxymethyl)pyrimidine + 2 H(+) = thiamine phosphate + CO2 + diphosphate. It catalyses the reaction 4-methyl-5-(2-phosphooxyethyl)-thiazole + 4-amino-2-methyl-5-(diphosphooxymethyl)pyrimidine + H(+) = thiamine phosphate + diphosphate. Its pathway is cofactor biosynthesis; thiamine diphosphate biosynthesis; thiamine phosphate from 4-amino-2-methyl-5-diphosphomethylpyrimidine and 4-methyl-5-(2-phosphoethyl)-thiazole: step 1/1. Condenses 4-methyl-5-(beta-hydroxyethyl)thiazole monophosphate (THZ-P) and 2-methyl-4-amino-5-hydroxymethyl pyrimidine pyrophosphate (HMP-PP) to form thiamine monophosphate (TMP). The sequence is that of Thiamine-phosphate synthase from Streptomyces avermitilis (strain ATCC 31267 / DSM 46492 / JCM 5070 / NBRC 14893 / NCIMB 12804 / NRRL 8165 / MA-4680).